Here is a 211-residue protein sequence, read N- to C-terminus: uncharacterized protein (211 aa).

A run of 6 helical transmembrane segments spans residues 21–38 (WYVITLLLVVIYIYASEI), 53–75 (WGMDWFNEIWNALVFHFTNYAAV), 82–104 (TAYLILIGLNIEISMMFAIMGVA), 124–146 (IFYAIVLSAACVVVEIILNAANV), 159–178 (PLLIFLIGYLPFFLVAYWVY), and 188–210 (AVSFGILAIDAVLLIVFAGLMEW).

It localises to the cell membrane. This is an uncharacterized protein from Archaeoglobus fulgidus (strain ATCC 49558 / DSM 4304 / JCM 9628 / NBRC 100126 / VC-16).